A 204-amino-acid chain; its full sequence is ATP synthase subunit 4, mitochondrial (204 aa).

Transmembrane regions (helical) follow at residues 27-47 and 52-72; these read GILA…LYVV and ILLV…APLY.

As to quaternary structure, F-type ATP synthases have 2 components, the catalytic core F(1) and the membrane-embedded component F(0), linked together by a central stalk and a peripheral stalk. The central stalk, also called rotor shaft, is often seen as part of F(1). The peripheral stalk is seen as part of F(0). F(0) contains the membrane channel next to the rotor. F-type ATP synthases form dimers but each monomer functions independently in ATP generation. The dimer consists of 18 different polypeptides: ATP1 (subunit alpha, part of F(1), 3 molecules per monomer), ATP2 (subunit beta, part of F(1), 3 molecules per monomer), ATP3 (subunit gamma, part of the central stalk), ATP4 (subunit b, part of the peripheral stalk), ATP5/OSCP (subunit 5/OSCP, part of the peripheral stalk), ATP6 (subunit a, part of the peripheral stalk), ATP7 (subunit d, part of the peripheral stalk), ATP8 (subunit 8, part of the peripheral stalk), OLI1 (subunit c, part of the rotor, 10 molecules per monomer), ATP14 (subunit h, part of the peripheral stalk), ATP15 (subunit epsilon, part of the central stalk), ATP16 (subunit delta, part of the central stalk), ATP17 (subunit f, part of the peripheral stalk), ATP18 (subunit i/j, part of the peripheral stalk). Dimer-specific subunits are ATP19 (subunit k, at interface between monomers), ATP20 (subunit g, at interface between monomers), TIM11 (subunit e, at interface between monomers). Also contains subunit L.

It is found in the mitochondrion inner membrane. Mitochondrial membrane ATP synthase (F(1)F(0) ATP synthase or Complex V) produces ATP from ADP in the presence of a proton gradient across the membrane which is generated by electron transport complexes of the respiratory chain. F-type ATP synthases consist of two structural domains, F(1) - containing the extramembraneous catalytic core, and F(0) - containing the membrane proton channel, linked together by a central stalk and a peripheral stalk. During catalysis, ATP synthesis in the catalytic domain of F(1) is coupled via a rotary mechanism of the central stalk subunits to proton translocation. Part of the complex F(0) domain and the peripheral stalk, which acts as a stator to hold the catalytic alpha/ATP1(3)beta/ATP2(3) subcomplex and subunit a/ATP6 static relative to the rotary elements. The chain is ATP synthase subunit 4, mitochondrial from Pichia angusta (Yeast).